Reading from the N-terminus, the 205-residue chain is Max-like protein homolog 2 (205 aa).

Composition is skewed to low complexity over residues 1-12 and 26-40; these read MSRSRSAAASSS and SASS…ATNS. The segment at 1-58 is disordered; sequence MSRSRSAAASSSQKPDDMDLMSPDGSASSPSAPNTPATNSGGFSSDRKKATHLRCERQ. Residues 45-58 show a composition bias toward basic and acidic residues; that stretch reads SDRKKATHLRCERQ. A basic motif region spans residues 47 to 60; it reads RKKATHLRCERQRR. Residues 47 to 101 enclose the bHLH domain; it reads RKKATHLRCERQRREAINSGYSDLKDLIPQTTTSLGCKTTNAAILFRACDFMSQL. Residues 61 to 101 form a helix-loop-helix motif region; sequence EAINSGYSDLKDLIPQTTTSLGCKTTNAAILFRACDFMSQL. Residues 98–132 adopt a coiled-coil conformation; that stretch reads MSQLKTDISDADKQLAQLNAQAAALEMIASEYEQM.

In terms of tissue distribution, widely expressed.

The protein localises to the nucleus. Its subcellular location is the cytoplasm. The protein resides in the mitochondrion. Transcription factor. Binds to the E box motif 5'-CACGTG-3', probably in a heterodimeric complex with mml-1. Involved in modulating longevity in response to TOR signaling, dietary restriction, the decline in protein homeostasis associated with normal aging, germline signaling and the insulin-like signaling pathway. Plays a role in autophagy. Involved in regulating migration of the ray 1 precursor cells in the male tail, acting in concert with Wnt and semaphorin signaling pathways. Regulates transcription of genes encoding extracellular matrix (ECM) components which may contribute to the substratum required for migration of the neighboring ray 1 precursor cells. Required for resistance to oxidative stress. Involved in promoting infection by the microsporidian pathogen N.parisii, probably acting independently of its canonical partner, mml-1. This chain is Max-like protein homolog 2, found in Caenorhabditis elegans.